The following is a 333-amino-acid chain: Alpha-N-acetylgalactosaminide alpha-2,6-sialyltransferase 6 (333 aa).

Residues 1–12 show a composition bias toward polar residues; that stretch reads MACSRPPSQCDP. The tract at residues 1–27 is disordered; it reads MACSRPPSQCDPTTLPPGPPAGRWPLP. Residues 1-43 lie on the Cytoplasmic side of the membrane; sequence MACSRPPSQCDPTTLPPGPPAGRWPLPFSRRRREMSSNKEQRS. The chain crosses the membrane as a helical; Signal-anchor for type II membrane protein span at residues 44–64; that stretch reads AVFVILFALITILILYSSNSA. The Lumenal segment spans residues 65-333; that stretch reads NEVFHYGSLR…GITFSHPSWT (269 aa). The N-linked (GlcNAc...) asparagine glycan is linked to N98. C108 and C256 form a disulfide bridge.

Belongs to the glycosyltransferase 29 family. Widely expressed, the gene expression is most abundant in colon, brain, liver, and heart.

The protein localises to the golgi apparatus membrane. It carries out the reaction a ganglioside GM1b (d18:1(4E)) + CMP-N-acetyl-beta-neuraminate = a ganglioside GD1alpha (d18:1(4E)) + CMP + H(+). The catalysed reaction is a ganglioside GD1a (d18:1(4E)) + CMP-N-acetyl-beta-neuraminate = a ganglioside GT1aalpha (d18:1(4E)) + CMP + H(+). The enzyme catalyses a ganglioside GT1b (d18:1(4E)) + CMP-N-acetyl-beta-neuraminate = a ganglioside GQ1balpha (d18:1(4E)) + CMP + H(+). It catalyses the reaction N-acetyl-alpha-neuraminosyl-(2-&gt;3)-beta-D-galactosyl-(1-&gt;3)-N-acetyl-beta-D-glucosaminyl-(1-&gt;3)-beta-D-galactosyl-(1-&gt;4)-beta-D-glucosyl-(1&lt;-&gt;1')-N-acyl-sphing-4-enine + CMP-N-acetyl-beta-neuraminate = N-acetyl-alpha-neuraminosyl-(2-&gt;3)-beta-D-galactosyl-(1-&gt;3)-[N-acetyl-alpha-neuraminosyl-(2-&gt;6)]-N-acetyl-beta-D-glucosaminyl-(1-&gt;3)-beta-D-galactosyl-(1-&gt;4)-beta-D-glucosyl-(1&lt;-&gt;1')-N-acyl-sphing-4-enine + CMP + H(+). It carries out the reaction a globoside MSGG + CMP-N-acetyl-beta-neuraminate = a globoside DSGG + CMP + H(+). The catalysed reaction is 3-O-[alpha-Neu5Ac-(2-&gt;3)-beta-D-Gal-(1-&gt;3)-alpha-D-GalNAc]-L-Ser-[protein] + CMP-N-acetyl-beta-neuraminate = a 3-O-{alpha-Neu5Ac-(2-&gt;3)-beta-D-Gal-(1-&gt;3)-[alpha-Neu5Ac-(2-&gt;6)]-alpha-D-GalNAc}-L-seryl-[protein] + CMP + H(+). The enzyme catalyses 3-O-[alpha-Neu5Ac-(2-&gt;3)-beta-D-Gal-(1-&gt;3)-alpha-D-GalNAc]-L-Thr-[protein] + CMP-N-acetyl-beta-neuraminate = a 3-O-{alpha-Neu5Ac-(2-&gt;3)-beta-D-Gal-(1-&gt;3)-[alpha-Neu5Ac-(2-&gt;6)]-alpha-D-GalNAc}-L-threonyl-[protein] + CMP + H(+). Its function is as follows. Transfers the sialyl group (N-acetyl-alpha-neuraminyl or NeuAc) from CMP-NeuAc onto glycolipids, forming an alpha-2,6-linkage. Produces branched type disialyl structures by transfer of a sialyl group onto the GalNAc or GlcNAc residue inside backbone core chains having a terminal sialic acid with an alpha-2,3-linkage on Gal. ST6GalNAcVI prefers glycolipids to glycoproteins, predominantly catalyzing the biosynthesis of ganglioside GD1alpha from GM1b. Also has activity toward GD1a and GT1b, and can generate DSGG (disialylgalactosylgloboside) from MSGG (monosialylgalactosylgloboside). Besides GMb1, MSGG and other glycolipids, it shows activity towards sialyl Lc4Cer generating disialyl Lc4Cer, which can lead to the synthesis of disialyl Lewis a (Le(a)), suggested to be a cancer-associated antigen. The polypeptide is Alpha-N-acetylgalactosaminide alpha-2,6-sialyltransferase 6 (St6galnac6) (Mus musculus (Mouse)).